Reading from the N-terminus, the 360-residue chain is Phospho-N-acetylmuramoyl-pentapeptide-transferase (360 aa).

Helical transmembrane passes span 26–46, 70–90, 94–114, 132–152, 168–188, 199–219, 239–259, 263–283, 288–308, and 338–358; these read AIMSVLTALILSLWMGPRLIA, GTPTMGGIMILAAITITALLW, SNPYIWAVLAVMLGYGVVGFV, WKYFWQSVIALVIAFALYMHG, VMPQLGLLYIVLTYFVIVGTS, GLAIMPTVMVAGGMAFIAWAT, LVVLCTAIVGAGLGFLWFNTY, VFMGDVGSLALGGALGTIAVL, LLLVIMGGVFVMETVSVILQV, and VIVRFWIITLMLVLIALATLK.

Belongs to the glycosyltransferase 4 family. MraY subfamily. Requires Mg(2+) as cofactor.

Its subcellular location is the cell inner membrane. The enzyme catalyses UDP-N-acetyl-alpha-D-muramoyl-L-alanyl-gamma-D-glutamyl-meso-2,6-diaminopimeloyl-D-alanyl-D-alanine + di-trans,octa-cis-undecaprenyl phosphate = di-trans,octa-cis-undecaprenyl diphospho-N-acetyl-alpha-D-muramoyl-L-alanyl-D-glutamyl-meso-2,6-diaminopimeloyl-D-alanyl-D-alanine + UMP. Its pathway is cell wall biogenesis; peptidoglycan biosynthesis. In terms of biological role, catalyzes the initial step of the lipid cycle reactions in the biosynthesis of the cell wall peptidoglycan: transfers peptidoglycan precursor phospho-MurNAc-pentapeptide from UDP-MurNAc-pentapeptide onto the lipid carrier undecaprenyl phosphate, yielding undecaprenyl-pyrophosphoryl-MurNAc-pentapeptide, known as lipid I. This is Phospho-N-acetylmuramoyl-pentapeptide-transferase from Photobacterium profundum (strain SS9).